The chain runs to 768 residues: DNA replication licensing factor MCM3 homolog 2 (768 aa).

One can recognise an MCM domain in the interval 290–497; it reads TFDLLGNSLA…IDRQISEHVA (208 aa). ATP is bound at residue 340 to 347; sequence GDPSVAKS. The short motif at 472 to 475 is the Arginine finger element; sequence SRFD. Residues 661 to 670 are compositionally biased toward basic and acidic residues; the sequence is EMKQQADHDA. The disordered stretch occupies residues 661-689; it reads EMKQQADHDAGATGGTVDGHGSSGNDPMD. Gly residues predominate over residues 672-682; sequence ATGGTVDGHGS.

Belongs to the MCM family.

The protein resides in the nucleus. The catalysed reaction is ATP + H2O = ADP + phosphate + H(+). In terms of biological role, acts as a factor that allows the DNA to undergo a single round of replication per cell cycle. Required for DNA replication and cell proliferation. May act as a component of the MCM complex which is the putative replicative helicase of the replication licensing system in eukaryotic cells. This chain is DNA replication licensing factor MCM3 homolog 2 (ROA2), found in Zea mays (Maize).